A 300-amino-acid polypeptide reads, in one-letter code: Chaperone protein dnaJ 50 (300 aa).

The first 27 residues, 1–27, serve as a signal peptide directing secretion; that stretch reads MAPPVTERWCLALILLFLSLFVQSSTA. Residues 28–122 lie on the Lumenal side of the membrane; that stretch reads IYCGAEDCYA…RAKYGHKSDP (95 aa). Residues 34–98 form the J domain; the sequence is DCYALLGVAQ…TTRAQYDYAI (65 aa). Asn-46 and Asn-88 each carry an N-linked (GlcNAc...) asparagine glycan. Residues 123-143 form a helical membrane-spanning segment; sequence RAVLVGLLVVLSAFQYLNNVA. At 144–206 the chain is on the cytoplasmic side; the sequence is RYNEAIATVK…LQIKGAEKPS (63 aa). Residues 207–227 form a helical membrane-spanning segment; it reads VWELLGVRFILLPYTIIKLLV. Over 228–300 the chain is Lumenal; sequence WYSSWVWRYK…EMRKESKRRR (73 aa).

As to expression, expressed in leaves, flower buds and flowers.

It localises to the endoplasmic reticulum membrane. In terms of biological role, may play a role in protein folding in the endoplasmic reticulum. In Arabidopsis thaliana (Mouse-ear cress), this protein is Chaperone protein dnaJ 50 (C50).